Here is a 309-residue protein sequence, read N- to C-terminus: ADP-L-glycero-D-manno-heptose-6-epimerase (309 aa).

NADP(+) contacts are provided by residues 10 to 11 (FI), 31 to 32 (DN), Lys38, Lys53, 75 to 79 (LGACS), and Asn92. The active-site Proton acceptor is Tyr140. Lys144 is a binding site for NADP(+). Position 169 (Asn169) interacts with substrate. NADP(+) is bound by residues Val170 and Lys178. The active-site Proton acceptor is the Lys178. Residues Ser180, His187, 201-204 (FLGS), Arg209, and Tyr272 contribute to the substrate site.

The protein belongs to the NAD(P)-dependent epimerase/dehydratase family. HldD subfamily. In terms of assembly, homopentamer. Requires NADP(+) as cofactor.

It catalyses the reaction ADP-D-glycero-beta-D-manno-heptose = ADP-L-glycero-beta-D-manno-heptose. It functions in the pathway nucleotide-sugar biosynthesis; ADP-L-glycero-beta-D-manno-heptose biosynthesis; ADP-L-glycero-beta-D-manno-heptose from D-glycero-beta-D-manno-heptose 7-phosphate: step 4/4. Its function is as follows. Catalyzes the interconversion between ADP-D-glycero-beta-D-manno-heptose and ADP-L-glycero-beta-D-manno-heptose via an epimerization at carbon 6 of the heptose. This is ADP-L-glycero-D-manno-heptose-6-epimerase from Hamiltonella defensa subsp. Acyrthosiphon pisum (strain 5AT).